A 376-amino-acid polypeptide reads, in one-letter code: N-acetyldiaminopimelate deacetylase (376 aa).

Residue Asp69 is part of the active site. Glu128 acts as the Proton acceptor in catalysis.

Belongs to the peptidase M20A family. N-acetyldiaminopimelate deacetylase subfamily.

It catalyses the reaction N-acetyl-(2S,6S)-2,6-diaminopimelate + H2O = (2S,6S)-2,6-diaminopimelate + acetate. It participates in amino-acid biosynthesis; L-lysine biosynthesis via DAP pathway; LL-2,6-diaminopimelate from (S)-tetrahydrodipicolinate (acetylase route): step 3/3. In terms of biological role, catalyzes the conversion of N-acetyl-diaminopimelate to diaminopimelate and acetate. This chain is N-acetyldiaminopimelate deacetylase, found in Bacillus cereus (strain AH820).